Consider the following 542-residue polypeptide: Chondroitin sulfate N-acetylgalactosaminyltransferase 2 (542 aa).

The Cytoplasmic segment spans residues 1 to 11 (MPRRGLILHTR). The helical; Signal-anchor for type II membrane protein transmembrane segment at 12-32 (THWLLLGLALLCSLVLFMYLL) threads the bilayer. Over 33–542 (ECAPQTDGNA…AYRTNSEAVG (510 aa)) the chain is Lumenal. Asn41 carries an N-linked (GlcNAc...) asparagine glycan. Positions 59–105 (ALLQEQEEHYQTRATSLKRQIAQLKQELQEMSEKMRSLQERRNVGAN) form a coiled coil. N-linked (GlcNAc...) asparagine glycosylation is present at Asn333. A divalent metal cation contacts are provided by Asp369 and His486.

Belongs to the chondroitin N-acetylgalactosaminyltransferase family. As to expression, ubiquitous.

The protein localises to the golgi apparatus. The protein resides in the golgi stack membrane. It carries out the reaction 3-O-(beta-D-GlcA-(1-&gt;3)-beta-D-Gal-(1-&gt;3)-beta-D-Gal-(1-&gt;4)-beta-D-Xyl)-L-seryl-[protein] + UDP-N-acetyl-alpha-D-galactosamine = 3-O-(beta-D-GalNAc-(1-&gt;4)-beta-D-GlcA-(1-&gt;3)-beta-D-Gal-(1-&gt;3)-beta-D-Gal-(1-&gt;4)-beta-D-Xyl)-L-seryl-[protein] + UDP + H(+). Its function is as follows. Transfers 1,4-N-acetylgalactosamine (GalNAc) from UDP-GalNAc to the non-reducing end of glucuronic acid (GlcUA). Required for addition of the first GalNAc to the core tetrasaccharide linker and for elongation of chondroitin chains. This chain is Chondroitin sulfate N-acetylgalactosaminyltransferase 2 (CSGALNACT2), found in Homo sapiens (Human).